We begin with the raw amino-acid sequence, 158 residues long: NAD(P)H-quinone oxidoreductase subunit J, chloroplastic (158 aa).

It belongs to the complex I 30 kDa subunit family. NDH is composed of at least 16 different subunits, 5 of which are encoded in the nucleus.

It localises to the plastid. The protein resides in the chloroplast thylakoid membrane. It catalyses the reaction a plastoquinone + NADH + (n+1) H(+)(in) = a plastoquinol + NAD(+) + n H(+)(out). The enzyme catalyses a plastoquinone + NADPH + (n+1) H(+)(in) = a plastoquinol + NADP(+) + n H(+)(out). NDH shuttles electrons from NAD(P)H:plastoquinone, via FMN and iron-sulfur (Fe-S) centers, to quinones in the photosynthetic chain and possibly in a chloroplast respiratory chain. The immediate electron acceptor for the enzyme in this species is believed to be plastoquinone. Couples the redox reaction to proton translocation, and thus conserves the redox energy in a proton gradient. The protein is NAD(P)H-quinone oxidoreductase subunit J, chloroplastic of Crucihimalaya wallichii (Rock-cress).